Reading from the N-terminus, the 206-residue chain is LexA repressor (206 aa).

The H-T-H motif DNA-binding region spans 28 to 48; sequence RAEIATRLGFKSANAAEEHLK. Active-site for autocatalytic cleavage activity residues include Ser-123 and Lys-160.

It belongs to the peptidase S24 family. In terms of assembly, homodimer.

It catalyses the reaction Hydrolysis of Ala-|-Gly bond in repressor LexA.. Its function is as follows. Represses a number of genes involved in the response to DNA damage (SOS response), including recA and lexA. In the presence of single-stranded DNA, RecA interacts with LexA causing an autocatalytic cleavage which disrupts the DNA-binding part of LexA, leading to derepression of the SOS regulon and eventually DNA repair. This Shewanella sp. (strain ANA-3) protein is LexA repressor.